The sequence spans 380 residues: Protein Wnt-5a (380 aa).

Positions 1 to 37 (MKKPIGILSPGVALGTAGGAMSSKFFLMALATFFSFA) are cleaved as a signal peptide. Residues 38–61 (QVVIEANSWWSLGMNNPVQMSEVY) constitute a propeptide that is removed on maturation. Cys104 and Cys115 form a disulfide bridge. Asn114 and Asn120 each carry an N-linked (GlcNAc...) asparagine glycan. Intrachain disulfides connect Cys154–Cys162, Cys164–Cys182, Cys238–Cys252, Cys240–Cys247, Cys309–Cys340, Cys325–Cys335, Cys339–Cys379, Cys355–Cys370, Cys357–Cys367, and Cys362–Cys363. Ser244 is lipidated: O-palmitoleoyl serine; by PORCN. 2 N-linked (GlcNAc...) asparagine glycosylation sites follow: Asn312 and Asn326.

This sequence belongs to the Wnt family. In terms of assembly, forms a soluble 1:1 complex with AFM; this prevents oligomerization and is required for prolonged biological activity. The complex with AFM may represent the physiological form in body fluids. Homooligomer; disulfide-linked, leading to inactivation. Interacts with PORCN. Interacts with WLS. Interacts with glypican GCP3. Interacts with PKD1 (via extracellular domain). Interacts with TMEM67. Glycosylation is necessary for secretion but not for activity. In terms of processing, palmitoleoylation is required for efficient binding to frizzled receptors. Depalmitoleoylation leads to Wnt signaling pathway inhibition. Post-translationally, proteolytic processing by TIKI1 and TIKI2 promotes oxidation and formation of large disulfide-bond oligomers, leading to inactivation of WNT5A. In terms of tissue distribution, expressed in a gradient at the caudal end of the embryo during gastrulation and later in the distal-most aspect of several structures that extend from the body such as the limbs and genital tubercle.

Its subcellular location is the secreted. It is found in the extracellular space. The protein resides in the extracellular matrix. Ligand for members of the frizzled family of seven transmembrane receptors. Can activate or inhibit canonical Wnt signaling, depending on receptor context. In the presence of FZD4, activates beta-catenin signaling. In the presence of ROR2, inhibits the canonical Wnt pathway by promoting beta-catenin degradation through a GSK3-independent pathway which involves down-regulation of beta-catenin-induced reporter gene expression. Suppression of the canonical pathway allows chondrogenesis to occur and inhibits tumor formation. Stimulates cell migration. Decreases proliferation, migration, invasiveness and clonogenicity of carcinoma cells and may act as a tumor suppressor. Mediates motility of melanoma cells. Required during embryogenesis for extension of the primary anterior-posterior axis and for outgrowth of limbs and the genital tubercle. Inhibits type II collagen expression in chondrocytes. The polypeptide is Protein Wnt-5a (Wnt5a) (Mus musculus (Mouse)).